Here is a 173-residue protein sequence, read N- to C-terminus: Shikimate kinase 1 (173 aa).

14–19 (GAGKST) lines the ATP pocket. Position 18 (Ser18) interacts with Mg(2+). Substrate is bound by residues Asp36, Arg60, and Gly82. Position 120 (Arg120) interacts with ATP. Arg140 is a substrate binding site. Gln157 is an ATP binding site.

Belongs to the shikimate kinase family. In terms of assembly, monomer. Requires Mg(2+) as cofactor.

The protein localises to the cytoplasm. It carries out the reaction shikimate + ATP = 3-phosphoshikimate + ADP + H(+). The protein operates within metabolic intermediate biosynthesis; chorismate biosynthesis; chorismate from D-erythrose 4-phosphate and phosphoenolpyruvate: step 5/7. Catalyzes the specific phosphorylation of the 3-hydroxyl group of shikimic acid using ATP as a cosubstrate. This chain is Shikimate kinase 1, found in Serratia proteamaculans (strain 568).